Consider the following 338-residue polypeptide: S-adenosylmethionine:tRNA ribosyltransferase-isomerase (338 aa).

This sequence belongs to the QueA family. Monomer.

The protein localises to the cytoplasm. The enzyme catalyses 7-aminomethyl-7-carbaguanosine(34) in tRNA + S-adenosyl-L-methionine = epoxyqueuosine(34) in tRNA + adenine + L-methionine + 2 H(+). Its pathway is tRNA modification; tRNA-queuosine biosynthesis. In terms of biological role, transfers and isomerizes the ribose moiety from AdoMet to the 7-aminomethyl group of 7-deazaguanine (preQ1-tRNA) to give epoxyqueuosine (oQ-tRNA). In Francisella tularensis subsp. mediasiatica (strain FSC147), this protein is S-adenosylmethionine:tRNA ribosyltransferase-isomerase.